We begin with the raw amino-acid sequence, 295 residues long: Phosphoribosylaminoimidazole-succinocarboxamide synthase (295 aa).

Belongs to the SAICAR synthetase family.

It catalyses the reaction 5-amino-1-(5-phospho-D-ribosyl)imidazole-4-carboxylate + L-aspartate + ATP = (2S)-2-[5-amino-1-(5-phospho-beta-D-ribosyl)imidazole-4-carboxamido]succinate + ADP + phosphate + 2 H(+). Its pathway is purine metabolism; IMP biosynthesis via de novo pathway; 5-amino-1-(5-phospho-D-ribosyl)imidazole-4-carboxamide from 5-amino-1-(5-phospho-D-ribosyl)imidazole-4-carboxylate: step 1/2. The chain is Phosphoribosylaminoimidazole-succinocarboxamide synthase from Halorhodospira halophila (strain DSM 244 / SL1) (Ectothiorhodospira halophila (strain DSM 244 / SL1)).